The sequence spans 278 residues: Transmembrane protein 41A-B (278 aa).

The N-terminal stretch at 1-23 is a signal peptide; it reads MRSIWGLIVLVAAATFYLYLLSA. The next 5 membrane-spanning stretches (helical) occupy residues 78 to 98, 101 to 121, 164 to 184, 191 to 211, and 230 to 250; these read GYVFILFCSAYLYKQSFAIPG, FLNMLSGALFGPLHGLIIACT, LFFFLLFLRFFPMTPNWFLNV, IPIPIFFFSILIGLIPYNFIC, and WFTLLQLLLIACVALLPGALI.

The protein belongs to the TMEM41 family.

It is found in the membrane. The chain is Transmembrane protein 41A-B from Danio rerio (Zebrafish).